The sequence spans 445 residues: Tubulin beta-7 chain (445 aa).

GTP contacts are provided by glutamine 11, glutamate 69, serine 138, glycine 142, threonine 143, glycine 144, asparagine 204, and asparagine 226. Glutamate 69 contributes to the Mg(2+) binding site. Residues 421 to 445 (EYQQYQDATAEDEEYEEEEEEEEET) form a disordered region. Residues 429 to 445 (TAEDEEYEEEEEEEEET) show a composition bias toward acidic residues.

It belongs to the tubulin family. As to quaternary structure, dimer of alpha and beta chains. A typical microtubule is a hollow water-filled tube with an outer diameter of 25 nm and an inner diameter of 15 nM. Alpha-beta heterodimers associate head-to-tail to form protofilaments running lengthwise along the microtubule wall with the beta-tubulin subunit facing the microtubule plus end conferring a structural polarity. Microtubules usually have 13 protofilaments but different protofilament numbers can be found in some organisms and specialized cells. Requires Mg(2+) as cofactor.

It is found in the cytoplasm. It localises to the cytoskeleton. In terms of biological role, tubulin is the major constituent of microtubules, a cylinder consisting of laterally associated linear protofilaments composed of alpha- and beta-tubulin heterodimers. Microtubules grow by the addition of GTP-tubulin dimers to the microtubule end, where a stabilizing cap forms. Below the cap, tubulin dimers are in GDP-bound state, owing to GTPase activity of alpha-tubulin. This chain is Tubulin beta-7 chain (TUBB7), found in Zea mays (Maize).